We begin with the raw amino-acid sequence, 300 residues long: MSVNYKSVIAMVDDALNLVEIVEEHPCPNGSEWVIYQYQRTSPLILSAWREGNKHHFVTKIGKEKLNLVPSLSAAGIEEVYIENNRVHIVYAGLAGGGVGAELRKGAKNVLEVNILEKGGGSRLGKAEVITPKMEKVIIGIDDTDTKEEGATWVLAHEIGLEVEKEGLGYYLDHTIVQLYPGNPNKTQNCVSIALSFAVYPEYKYKLDKFIKKLLKERSLSDETAMAVYYGLFPSKSMKLFALKAKKEMVKIEEAKSIALRNNIKIIPINGEGGIIGAVAALGLAEHHSLAPKLCEDIKL.

This is an uncharacterized protein from Methanocaldococcus jannaschii (strain ATCC 43067 / DSM 2661 / JAL-1 / JCM 10045 / NBRC 100440) (Methanococcus jannaschii).